A 216-amino-acid polypeptide reads, in one-letter code: Small ribosomal subunit protein uS5 (216 aa).

The interval 1–55 (MDKKLENQKDLLNQDPKVELNSQSVAKNPLNSREVKPIQRRRPLRKNARDKNSKP) is disordered. The span at 20-31 (LNSQSVAKNPLN) shows a compositional bias: polar residues. The 64-residue stretch at 57 to 120 (FEERVIAIHR…KDAQNRLVSV (64 aa)) folds into the S5 DRBM domain.

Belongs to the universal ribosomal protein uS5 family. As to quaternary structure, part of the 30S ribosomal subunit. Contacts proteins S4 and S8.

With S4 and S12 plays an important role in translational accuracy. Its function is as follows. Located at the back of the 30S subunit body where it stabilizes the conformation of the head with respect to the body. The chain is Small ribosomal subunit protein uS5 from Mesomycoplasma hyopneumoniae (strain 7448) (Mycoplasma hyopneumoniae).